The sequence spans 154 residues: Myoglobin (154 aa).

The 147-residue stretch at 2-148 (GLSDGEWQMV…FRNDIAAKYK (147 aa)) folds into the Globin domain. S4 and S32 each carry phosphoserine. Residue H65 coordinates nitrite. An O2-binding site is contributed by H65. Phosphothreonine is present on T68. Residue H94 coordinates heme b. S121 and S133 each carry phosphoserine.

This sequence belongs to the globin family. As to quaternary structure, monomeric.

It is found in the cytoplasm. The protein resides in the sarcoplasm. The enzyme catalyses Fe(III)-heme b-[protein] + nitric oxide + H2O = Fe(II)-heme b-[protein] + nitrite + 2 H(+). It catalyses the reaction H2O2 + AH2 = A + 2 H2O. In terms of biological role, monomeric heme protein which primary function is to store oxygen and facilitate its diffusion within muscle tissues. Reversibly binds oxygen through a pentacoordinated heme iron and enables its timely and efficient release as needed during periods of heightened demand. Depending on the oxidative conditions of tissues and cells, and in addition to its ability to bind oxygen, it also has a nitrite reductase activity whereby it regulates the production of bioactive nitric oxide. Under stress conditions, like hypoxia and anoxia, it also protects cells against reactive oxygen species thanks to its pseudoperoxidase activity. This is Myoglobin from Rattus norvegicus (Rat).